The primary structure comprises 161 residues: Monooxygenase AgnL5 (161 aa).

Belongs to the avfA family.

Its pathway is secondary metabolite biosynthesis. In terms of biological role, monooxygenase; part of the gene cluster that mediates the biosynthesis of agnestins, dihydroxy-xanthone metabolites. The pathway begins with the assembly and cyclization of atrochrysone thioester by the non-reducing polyketide synthase Agnpks1. The atrochrysone carboxyl ACP thioesterase AgnL7 then breaks the thioester bond and releases the atrochrysone carboxylic acid as the first enzyme-free intermediate. The decarboxylase AgnL1 then catalyzes the concerted decarboxylation-elimination required to convert atochrysone carboxylic acid into emodin anthrone, which is further oxidized to emodin by the anthrone oxygenase AgnL2. Emodin then undergoes reduction catalyzed by the oxidoreductase AgnL4 to yield the dihydroquinone tautomer which is the substrate for reduction by the short chain dehydrogenase AgnL6 reduction to produce hydroxyketone, followed by AgnL8 dehydration and likely spontaneous autoxidation to chrysophanol. Baeyer-Villiger oxidation by the oxidase AgnL3 leads to monodictyphenone via cleavage of the C-10/C-10a bond of chrysophanol. Alternative cleavage at the C-4a/C-10 bond of chrysophanol also leads to the formation some cephalone F. Further conversion to agnestins A and B, requires reduction to dihydro-monodictyphenone, oxidation to agnestin C probably via an epoxide, and rearrangement to either agnestin A or agnestin B directly, although agnestin A or agnestin B can also interconvert. Within the cluster, AgnR1 is the only unassigned oxidoreductase present which could be involved in this conversion. However, AgnR1 seems not to be involved in this step, and thus genes involved in the proposed oxidation/reduction may be located elsewhere on the genome. Further agnestin A derivatives are probably formed by spontaneous decarboxylations, dehydrations and methanolysis reactions. The chain is Monooxygenase AgnL5 from Paecilomyces divaricatus (Penicillium divaricatum).